The chain runs to 107 residues: ATP-dependent Clp protease adapter protein ClpS (107 aa).

The span at Met1–Asp12 shows a compositional bias: basic and acidic residues. The tract at residues Met1–Pro21 is disordered.

It belongs to the ClpS family. As to quaternary structure, binds to the N-terminal domain of the chaperone ClpA.

In terms of biological role, involved in the modulation of the specificity of the ClpAP-mediated ATP-dependent protein degradation. In Zymomonas mobilis subsp. mobilis (strain ATCC 31821 / ZM4 / CP4), this protein is ATP-dependent Clp protease adapter protein ClpS.